Reading from the N-terminus, the 899-residue chain is Protein translocase subunit SecA (899 aa).

ATP contacts are provided by residues Gln87, 105–109, and Asp512; that span reads GEGKT. Disordered stretches follow at residues 573–592 and 861–899; these read RRIDNQLRGRSGRQGDPGSS and ITVNDDEHPAEPAKSQKNAGRNEPCPCGSGKKYKKCCGK. Zn(2+)-binding residues include Cys885, Cys887, Cys896, and Cys897.

The protein belongs to the SecA family. Monomer and homodimer. Part of the essential Sec protein translocation apparatus which comprises SecA, SecYEG and auxiliary proteins SecDF-YajC and YidC. The cofactor is Zn(2+).

It localises to the cell inner membrane. The protein resides in the cytoplasm. It catalyses the reaction ATP + H2O + cellular proteinSide 1 = ADP + phosphate + cellular proteinSide 2.. Its function is as follows. Part of the Sec protein translocase complex. Interacts with the SecYEG preprotein conducting channel. Has a central role in coupling the hydrolysis of ATP to the transfer of proteins into and across the cell membrane, serving as an ATP-driven molecular motor driving the stepwise translocation of polypeptide chains across the membrane. The chain is Protein translocase subunit SecA from Trichlorobacter lovleyi (strain ATCC BAA-1151 / DSM 17278 / SZ) (Geobacter lovleyi).